A 117-amino-acid chain; its full sequence is uncharacterized protein (117 aa).

Positions 1–18 (MKFFWVSSLLGLLGLSTA) are cleaved as a signal peptide. Asn-86 carries N-linked (GlcNAc...) asparagine glycosylation.

This is an uncharacterized protein from Schizosaccharomyces pombe (strain 972 / ATCC 24843) (Fission yeast).